A 463-amino-acid chain; its full sequence is Probable cysteine protease RD21B (463 aa).

Residues 1–21 form the signal peptide; that stretch reads MGFLKLSPMILLLAMIGVSYA. A propeptide spans 22-137 (activation peptide); that stretch reads MDMSIISYDE…DRYQARVGDA (116 aa). Residue N92 is glycosylated (N-linked (GlcNAc...) asparagine). 5 disulfides stabilise this stretch: C159–C201, C193–C234, C292–C343, C376–C388, and C382–C403. C162 is a catalytic residue. Active-site residues include H298 and N318. Residues 354-463 constitute a propeptide, removed in mature form; that stretch reads KKGQNPPNPG…FWAKSRKHIA (110 aa). An N-linked (GlcNAc...) asparagine glycan is attached at N415.

The protein belongs to the peptidase C1 family. As to quaternary structure, interacts with PRN2. Interacts with WSCP.

In terms of biological role, probable thiol protease. In Arabidopsis thaliana (Mouse-ear cress), this protein is Probable cysteine protease RD21B.